The following is a 106-amino-acid chain: Urease subunit beta (106 aa).

This sequence belongs to the urease beta subunit family. As to quaternary structure, heterotrimer of UreA (gamma), UreB (beta) and UreC (alpha) subunits. Three heterotrimers associate to form the active enzyme.

Its subcellular location is the cytoplasm. It catalyses the reaction urea + 2 H2O + H(+) = hydrogencarbonate + 2 NH4(+). It functions in the pathway nitrogen metabolism; urea degradation; CO(2) and NH(3) from urea (urease route): step 1/1. The protein is Urease subunit beta of Synechococcus sp. (strain CC9311).